A 440-amino-acid chain; its full sequence is Glyceraldehyde-3-phosphate dehydrogenase, testis-specific (440 aa).

The tract at residues Met1 to Ala105 is testis-specific N-terminal extension. 2 stretches are compositionally biased toward pro residues: residues Pro40 to Ile75 and Ala83 to Gln102. The disordered stretch occupies residues Pro40 to Arg106. Residues Arg117 to Ile118, Asp138, Lys183, Tyr205, and Thr225 contribute to the NAD(+) site. D-glyceraldehyde 3-phosphate is bound by residues Ser255–Thr257, Thr286, Thr315–Gly316, and Arg338. The active-site Nucleophile is Cys256. Ser358 is subject to Phosphoserine. Asn420 is a binding site for NAD(+).

It belongs to the glyceraldehyde-3-phosphate dehydrogenase family. Homotetramer. As to expression, testis specific.

Its subcellular location is the cytoplasm. It carries out the reaction D-glyceraldehyde 3-phosphate + phosphate + NAD(+) = (2R)-3-phospho-glyceroyl phosphate + NADH + H(+). It participates in carbohydrate degradation; glycolysis; pyruvate from D-glyceraldehyde 3-phosphate: step 1/5. In terms of biological role, may play an important role in regulating the switch between different pathways for energy production during spermiogenesis and in the spermatozoon. Required for sperm motility and male fertility. This chain is Glyceraldehyde-3-phosphate dehydrogenase, testis-specific (Gapdhs), found in Mus musculus (Mouse).